The sequence spans 309 residues: Ribose-phosphate pyrophosphokinase (309 aa).

ATP is bound by residues aspartate 37 to glutamate 39 and arginine 96 to glutamine 97. Mg(2+)-binding residues include histidine 130 and aspartate 169. Lysine 192 is an active-site residue. Residues arginine 194, aspartate 218, and aspartate 222–threonine 226 contribute to the D-ribose 5-phosphate site.

The protein belongs to the ribose-phosphate pyrophosphokinase family. Class I subfamily. In terms of assembly, homohexamer. Mg(2+) is required as a cofactor.

It localises to the cytoplasm. It carries out the reaction D-ribose 5-phosphate + ATP = 5-phospho-alpha-D-ribose 1-diphosphate + AMP + H(+). It functions in the pathway metabolic intermediate biosynthesis; 5-phospho-alpha-D-ribose 1-diphosphate biosynthesis; 5-phospho-alpha-D-ribose 1-diphosphate from D-ribose 5-phosphate (route I): step 1/1. Its function is as follows. Involved in the biosynthesis of the central metabolite phospho-alpha-D-ribosyl-1-pyrophosphate (PRPP) via the transfer of pyrophosphoryl group from ATP to 1-hydroxyl of ribose-5-phosphate (Rib-5-P). This chain is Ribose-phosphate pyrophosphokinase, found in Campylobacter jejuni subsp. jejuni serotype O:2 (strain ATCC 700819 / NCTC 11168).